The chain runs to 211 residues: Imidazole glycerol phosphate synthase subunit HisH (211 aa).

Positions 3-211 (VIAVIDYDMG…VSQIKAPVLV (209 aa)) constitute a Glutamine amidotransferase type-1 domain. Cys81 acts as the Nucleophile in catalysis. Catalysis depends on residues His186 and Glu188.

As to quaternary structure, heterodimer of HisH and HisF.

Its subcellular location is the cytoplasm. The catalysed reaction is 5-[(5-phospho-1-deoxy-D-ribulos-1-ylimino)methylamino]-1-(5-phospho-beta-D-ribosyl)imidazole-4-carboxamide + L-glutamine = D-erythro-1-(imidazol-4-yl)glycerol 3-phosphate + 5-amino-1-(5-phospho-beta-D-ribosyl)imidazole-4-carboxamide + L-glutamate + H(+). It catalyses the reaction L-glutamine + H2O = L-glutamate + NH4(+). Its pathway is amino-acid biosynthesis; L-histidine biosynthesis; L-histidine from 5-phospho-alpha-D-ribose 1-diphosphate: step 5/9. IGPS catalyzes the conversion of PRFAR and glutamine to IGP, AICAR and glutamate. The HisH subunit catalyzes the hydrolysis of glutamine to glutamate and ammonia as part of the synthesis of IGP and AICAR. The resulting ammonia molecule is channeled to the active site of HisF. This chain is Imidazole glycerol phosphate synthase subunit HisH, found in Cyanothece sp. (strain PCC 7425 / ATCC 29141).